A 144-amino-acid polypeptide reads, in one-letter code: Large ribosomal subunit protein uL13 (144 aa).

It belongs to the universal ribosomal protein uL13 family. Part of the 50S ribosomal subunit.

In terms of biological role, this protein is one of the early assembly proteins of the 50S ribosomal subunit, although it is not seen to bind rRNA by itself. It is important during the early stages of 50S assembly. The sequence is that of Large ribosomal subunit protein uL13 from Nitratidesulfovibrio vulgaris (strain ATCC 29579 / DSM 644 / CCUG 34227 / NCIMB 8303 / VKM B-1760 / Hildenborough) (Desulfovibrio vulgaris).